A 272-amino-acid polypeptide reads, in one-letter code: 3-methyl-2-oxobutanoate hydroxymethyltransferase (272 aa).

Residues aspartate 53 and aspartate 92 each coordinate Mg(2+). 3-methyl-2-oxobutanoate is bound by residues 53 to 54 (DS), aspartate 92, and lysine 120. Glutamate 122 lines the Mg(2+) pocket. The active-site Proton acceptor is glutamate 189.

The protein belongs to the PanB family. Homodecamer; pentamer of dimers. The cofactor is Mg(2+).

The protein resides in the cytoplasm. It carries out the reaction 3-methyl-2-oxobutanoate + (6R)-5,10-methylene-5,6,7,8-tetrahydrofolate + H2O = 2-dehydropantoate + (6S)-5,6,7,8-tetrahydrofolate. It functions in the pathway cofactor biosynthesis; (R)-pantothenate biosynthesis; (R)-pantoate from 3-methyl-2-oxobutanoate: step 1/2. Its function is as follows. Catalyzes the reversible reaction in which hydroxymethyl group from 5,10-methylenetetrahydrofolate is transferred onto alpha-ketoisovalerate to form ketopantoate. The protein is 3-methyl-2-oxobutanoate hydroxymethyltransferase of Ralstonia pickettii (strain 12J).